A 470-amino-acid chain; its full sequence is Glucose-1-phosphate adenylyltransferase (470 aa).

Alpha-D-glucose 1-phosphate-binding positions include Gly165, 182–183 (EK), and Ser200.

The protein belongs to the bacterial/plant glucose-1-phosphate adenylyltransferase family. As to quaternary structure, homotetramer.

It catalyses the reaction alpha-D-glucose 1-phosphate + ATP + H(+) = ADP-alpha-D-glucose + diphosphate. Its pathway is glycan biosynthesis; glycogen biosynthesis. Involved in the biosynthesis of ADP-glucose, a building block required for the elongation reactions to produce glycogen. Catalyzes the reaction between ATP and alpha-D-glucose 1-phosphate (G1P) to produce pyrophosphate and ADP-Glc. This is Glucose-1-phosphate adenylyltransferase from Paenarthrobacter aurescens (strain TC1).